Here is a 98-residue protein sequence, read N- to C-terminus: DNA-binding protein Fis (98 aa).

Positions 74-93 (QTRAATMMGINRGTLRKKLK) form a DNA-binding region, H-T-H motif.

Belongs to the transcriptional regulatory Fis family. In terms of assembly, homodimer.

Its function is as follows. Activates ribosomal RNA transcription. Plays a direct role in upstream activation of rRNA promoters. The chain is DNA-binding protein Fis from Vibrio atlanticus (strain LGP32) (Vibrio splendidus (strain Mel32)).